Consider the following 284-residue polypeptide: Probable endonuclease 4 (284 aa).

9 residues coordinate Zn(2+): His69, His113, Glu148, Asp182, His185, His217, Asp230, His232, and Glu262.

The protein belongs to the AP endonuclease 2 family. Zn(2+) serves as cofactor.

The enzyme catalyses Endonucleolytic cleavage to 5'-phosphooligonucleotide end-products.. In terms of biological role, endonuclease IV plays a role in DNA repair. It cleaves phosphodiester bonds at apurinic or apyrimidinic (AP) sites, generating a 3'-hydroxyl group and a 5'-terminal sugar phosphate. This Bifidobacterium longum subsp. infantis (strain ATCC 15697 / DSM 20088 / JCM 1222 / NCTC 11817 / S12) protein is Probable endonuclease 4.